The chain runs to 386 residues: Patatin group M-2 (386 aa).

Residues 1 to 23 (MATTKSFLILFFMILATTSSTCA) form the signal peptide. The PNPLA domain occupies 32-229 (LSIDGGGIKG…TVGDPALLSL (198 aa)). The GXGXXG motif lies at 36 to 41 (GGGIKG). Residues 75–79 (GTSTG) carry the GXSXG motif. Residue Ser77 is the Nucleophile of the active site. An N-linked (GlcNAc...) asparagine glycan is attached at Asn115. The active-site Proton acceptor is Asp215. Residues 215–217 (DGG) carry the DGA/G motif. A coiled-coil region spans residues 321–384 (ENALTGTTTE…DRKKLRANKA (64 aa)).

The protein belongs to the patatin family. In terms of tissue distribution, tuber.

It localises to the vacuole. Functionally, probable lipolytic acyl hydrolase (LAH), an activity which is thought to be involved in the response of tubers to pathogens. This Solanum tuberosum (Potato) protein is Patatin group M-2.